Here is an 88-residue protein sequence, read N- to C-terminus: LYR motif-containing protein 2 (88 aa).

Residues 1–19 (MAASRLPPATLTLKQFMRR) constitute a mitochondrion transit peptide.

It belongs to the complex I LYR family.

It is found in the mitochondrion. Its function is as follows. Involved in efficient integration of the N-module into mitochondrial respiratory chain complex I. This chain is LYR motif-containing protein 2 (Lyrm2), found in Rattus norvegicus (Rat).